The following is a 502-amino-acid chain: MTEIIQELDLNGEMLVRREKLAALRAKGNAFPNTFRRNALAQDLHTQYDEIESESLKTQGIEVKVAGRIMTRRVMGKATFITLQDMSGKIQLYVARDNLAEGVYTDDVGNWDLGDIVGVKGTLFKTKTNELTIRATEVHLLTKALRPLPNKFHGLSDQETRYRQRYLDLIANEDSRRTFIIRSKVIAGIREYFISKGFMEVETPMLQIIPGGASARPFITHHNALDVDMYLRIAPELYLKRLVVGGFERVFELNRNFRNEGVSIRHNPEFTMLEYYQAYADYHDLMDNTEELLRKLALDILGTTIVPYGDLKFDFGKPFERITMHEAILKYGAEQGIVKEDLYDFDRAVAVAQKLGIEVQKSWGLGSLVNAIFEEVAEHHLIQPTFLMAHPAEISPLARRNDENPDVTDRFELFIGGREIGNGFSELNDAEDQNERFDAQVAAKEAGDDEAMFKDEDFVTALEHGLPPTAGEGLGIDRLAMLFANANSIRDVILFPAMKTKS.

Positions 412 and 419 each coordinate Mg(2+).

Belongs to the class-II aminoacyl-tRNA synthetase family. Homodimer. The cofactor is Mg(2+).

The protein localises to the cytoplasm. It catalyses the reaction tRNA(Lys) + L-lysine + ATP = L-lysyl-tRNA(Lys) + AMP + diphosphate. This is Lysine--tRNA ligase from Histophilus somni (strain 2336) (Haemophilus somnus).